A 263-amino-acid chain; its full sequence is Isatin hydrolase (263 aa).

62 to 66 (FFAWN) lines the substrate pocket. Mn(2+)-binding residues include His-73, His-77, and Asp-79. The active-site Proton donor/acceptor is the His-83. His-212 contacts substrate.

The protein belongs to the Cyclase 1 superfamily. In terms of assembly, homodimer. Mn(2+) is required as a cofactor.

The catalysed reaction is isatin + H2O = isatinate + H(+). Inhibited by thioisatinate. Its function is as follows. Involved in the degradation of the plant hormone indole-3-acetic acid (IAA). Catalyzes the hydrolysis of the cyclic amide bond (lactam) of isatin (1H-indole-2,3-dione) to yield isatinate (2-(2-aminophenyl)-2-oxoacetate). The polypeptide is Isatin hydrolase (Roseibium aggregatum (strain ATCC 25650 / DSM 13394 / JCM 20685 / NBRC 16684 / NCIMB 2208 / IAM 12614 / B1) (Stappia aggregata)).